Reading from the N-terminus, the 160-residue chain is MVPSAGQLALFALGIVLAACQALENSTSPLSADPPVAAAVVSHFNDCPDSHTQFCFHGTCRFLVQEDKPACVCHSGYVGARCEHADLLAVVAASQKKQAITALVVVSIVALAVLIITCVLIHCCQVRKHCEWCRALICRHEKPSALLKGRTACCHSETVV.

A signal peptide spans 1 to 23 (MVPSAGQLALFALGIVLAACQAL). The propeptide at 24–39 (ENSTSPLSADPPVAAA) is removed in mature form. Topologically, residues 24–98 (ENSTSPLSAD…AVVAASQKKQ (75 aa)) are extracellular. The N-linked (GlcNAc...) asparagine glycan is linked to Asn25. An EGF-like domain is found at 43–83 (HFNDCPDSHTQFCFHGTCRFLVQEDKPACVCHSGYVGARCE). 3 disulfides stabilise this stretch: Cys47–Cys60, Cys55–Cys71, and Cys73–Cys82. Positions 90-160 (VVAASQKKQA…TACCHSETVV (71 aa)) are cleaved as a propeptide — removed in mature form. A helical membrane pass occupies residues 99–124 (AITALVVVSIVALAVLIITCVLIHCC). The Cytoplasmic portion of the chain corresponds to 125–160 (QVRKHCEWCRALICRHEKPSALLKGRTACCHSETVV). S-palmitoyl cysteine attachment occurs at residues Cys153 and Cys154.

As to quaternary structure, interacts with the PDZ domains of MAGI3, SDCBP and SNTA1. The interaction with SDCBP, is required for the targeting to the cell surface. In the endoplasmic reticulum, in its immature form (i.e. with a prosegment and lacking full N-glycosylation), interacts with CNIH. In the Golgi apparatus, may form a complex with CNIH and GORASP2. Interacts (via cytoplasmic C-terminal domain) with NKD2. In terms of tissue distribution, isoform 1, isoform 3 and isoform 4 are expressed in keratinocytes and tumor-derived cell lines.

It is found in the secreted. Its subcellular location is the extracellular space. It localises to the cell membrane. Its function is as follows. TGF alpha is a mitogenic polypeptide that is able to bind to the EGF receptor/EGFR and to act synergistically with TGF beta to promote anchorage-independent cell proliferation in soft agar. The polypeptide is Protransforming growth factor alpha (TGFA) (Homo sapiens (Human)).